The primary structure comprises 352 residues: Anthranilate phosphoribosyltransferase (352 aa).

5-phospho-alpha-D-ribose 1-diphosphate contacts are provided by residues glycine 82, 85–86 (GD), serine 90, 92–95 (NIST), 110–118 (KHGNRAVTG), and glycine 122. Glycine 82 contacts anthranilate. Serine 94 provides a ligand contact to Mg(2+). Asparagine 113 serves as a coordination point for anthranilate. Arginine 168 is an anthranilate binding site. Mg(2+) contacts are provided by aspartate 232 and glutamate 233.

Belongs to the anthranilate phosphoribosyltransferase family. As to quaternary structure, homodimer. Mg(2+) serves as cofactor.

The catalysed reaction is N-(5-phospho-beta-D-ribosyl)anthranilate + diphosphate = 5-phospho-alpha-D-ribose 1-diphosphate + anthranilate. Its pathway is amino-acid biosynthesis; L-tryptophan biosynthesis; L-tryptophan from chorismate: step 2/5. In terms of biological role, catalyzes the transfer of the phosphoribosyl group of 5-phosphorylribose-1-pyrophosphate (PRPP) to anthranilate to yield N-(5'-phosphoribosyl)-anthranilate (PRA). The protein is Anthranilate phosphoribosyltransferase of Methanothermobacter thermautotrophicus (strain ATCC 29096 / DSM 1053 / JCM 10044 / NBRC 100330 / Delta H) (Methanobacterium thermoautotrophicum).